The chain runs to 203 residues: Glycerol-3-phosphate acyltransferase (203 aa).

4 consecutive transmembrane segments (helical) span residues 4 to 24 (LALIMTMAAYLLGSISSAVLI), 68 to 88 (IPVWGGYFLGIDPIILGVIAI), 117 to 137 (PIGLDLTGLVMLTWLSVAVLF), and 155 to 175 (TWMFKPQYTLPVAMLCCLIVF).

The protein belongs to the PlsY family. Probably interacts with PlsX.

The protein localises to the cell inner membrane. It carries out the reaction an acyl phosphate + sn-glycerol 3-phosphate = a 1-acyl-sn-glycero-3-phosphate + phosphate. It functions in the pathway lipid metabolism; phospholipid metabolism. Functionally, catalyzes the transfer of an acyl group from acyl-phosphate (acyl-PO(4)) to glycerol-3-phosphate (G3P) to form lysophosphatidic acid (LPA). This enzyme utilizes acyl-phosphate as fatty acyl donor, but not acyl-CoA or acyl-ACP. In Vibrio campbellii (strain ATCC BAA-1116), this protein is Glycerol-3-phosphate acyltransferase.